The following is a 340-amino-acid chain: DNA polymerase III subunit delta' (340 aa).

As to quaternary structure, the DNA polymerase holoenzyme is a complex that contains 10 different types of subunits. These subunits are organized into 3 functionally essential subassemblies: the pol III core, the beta sliding clamp processivity factor and the clamp-loading complex. The pol III core (subunits alpha,epsilon and theta) contains the polymerase and the 3'-5' exonuclease proofreading activities. The polymerase is tethered to the template via the sliding clamp processivity factor. The clamp-loading complex assembles the beta processivity factor onto the primer template and plays a central role in the organization and communication at the replication fork. This complex contains delta, delta', psi and chi, and copies of either or both of two different DnaX proteins, gamma and tau. The composition of the holoenzyme is, therefore: (alpha,epsilon,theta)[2]-(gamma/tau)[3]-delta,delta', psi,chi-beta[4].

It carries out the reaction DNA(n) + a 2'-deoxyribonucleoside 5'-triphosphate = DNA(n+1) + diphosphate. In terms of biological role, DNA polymerase III is a complex, multichain enzyme responsible for most of the replicative synthesis in bacteria. This DNA polymerase also exhibits 3' to 5' exonuclease activity. The sequence is that of DNA polymerase III subunit delta' (holB) from Yersinia pestis.